The chain runs to 295 residues: Ribosomal RNA small subunit methyltransferase H (295 aa).

S-adenosyl-L-methionine contacts are provided by residues 35–37 (GGH), Glu-55, Phe-82, Asp-103, and Gln-110.

This sequence belongs to the methyltransferase superfamily. RsmH family.

The protein resides in the cytoplasm. It carries out the reaction cytidine(1402) in 16S rRNA + S-adenosyl-L-methionine = N(4)-methylcytidine(1402) in 16S rRNA + S-adenosyl-L-homocysteine + H(+). In terms of biological role, specifically methylates the N4 position of cytidine in position 1402 (C1402) of 16S rRNA. This is Ribosomal RNA small subunit methyltransferase H from Desulfotalea psychrophila (strain LSv54 / DSM 12343).